Reading from the N-terminus, the 429-residue chain is Enolase (429 aa).

Gln-162 contacts (2R)-2-phosphoglycerate. Catalysis depends on Glu-204, which acts as the Proton donor. 3 residues coordinate Mg(2+): Asp-241, Glu-283, and Asp-310. Positions 335, 364, 365, and 386 each coordinate (2R)-2-phosphoglycerate. Residue Lys-335 is the Proton acceptor of the active site.

It belongs to the enolase family. It depends on Mg(2+) as a cofactor.

The protein localises to the cytoplasm. The protein resides in the secreted. Its subcellular location is the cell surface. The catalysed reaction is (2R)-2-phosphoglycerate = phosphoenolpyruvate + H2O. It participates in carbohydrate degradation; glycolysis; pyruvate from D-glyceraldehyde 3-phosphate: step 4/5. In terms of biological role, catalyzes the reversible conversion of 2-phosphoglycerate (2-PG) into phosphoenolpyruvate (PEP). It is essential for the degradation of carbohydrates via glycolysis. This is Enolase from Mycolicibacterium vanbaalenii (strain DSM 7251 / JCM 13017 / BCRC 16820 / KCTC 9966 / NRRL B-24157 / PYR-1) (Mycobacterium vanbaalenii).